A 550-amino-acid chain; its full sequence is Glycosyltransferase-like protein gnt12 (550 aa).

A disordered region spans residues 1 to 29; sequence MSYLPLYNNNNNINNNNNNNNNRINNNKE. The Cytoplasmic segment spans residues 1–36; it reads MSYLPLYNNNNNINNNNNNNNNRINNNKEKGVKNKP. A compositionally biased stretch (low complexity) spans 8 to 25; the sequence is NNNNNINNNNNNNNNRIN. Residues 37–57 traverse the membrane as a helical; Signal-anchor for type II membrane protein segment; that stretch reads FQIFISIVFIVFLCFFLIWSM. The Extracellular portion of the chain corresponds to 58 to 550; the sequence is EAKKDKNIKI…LFNEPLTNEC (493 aa). Low complexity predominate over residues 81–97; the sequence is LINEPINNNKNNKNNIP. The disordered stretch occupies residues 81–100; that stretch reads LINEPINNNKNNKNNIPKNH. N-linked (GlcNAc...) asparagine glycosylation is found at Asn-233, Asn-322, and Asn-426.

It belongs to the glycosyltransferase 8 family. Highly divergent.

The protein resides in the membrane. The protein is Glycosyltransferase-like protein gnt12 (gnt12) of Dictyostelium discoideum (Social amoeba).